The sequence spans 513 residues: Putative ADP-ribosyl glycohydrolase L444 (513 aa).

Over residues 1–23 (MSDKIQSRESKTTKPTKTEKISD) the composition is skewed to basic and acidic residues. The interval 1–33 (MSDKIQSRESKTTKPTKTEKISDKSGNLSQVKS) is disordered. A compositionally biased stretch (polar residues) spans 24–33 (KSGNLSQVKS).

It belongs to the ADP-ribosylglycohydrolase family.

This chain is Putative ADP-ribosyl glycohydrolase L444, found in Acanthamoeba polyphaga mimivirus (APMV).